Consider the following 267-residue polypeptide: Small ribosomal subunit protein uS2 (267 aa).

The disordered stretch occupies residues 225 to 267 (LREQELEGEEQEEAAPATEEEKKELIEEAVAEGEAEETEEEEK). Over residues 251–267 (EEAVAEGEAEETEEEEK) the composition is skewed to acidic residues.

Belongs to the universal ribosomal protein uS2 family.

In Nitratiruptor sp. (strain SB155-2), this protein is Small ribosomal subunit protein uS2.